A 445-amino-acid polypeptide reads, in one-letter code: Homogentisate 1,2-dioxygenase (445 aa).

Position 98 is an N6-acetyllysine (Lys-98). Positions 335, 341, and 371 each coordinate Fe cation. Lys-414 bears the N6-succinyllysine mark.

It belongs to the homogentisate dioxygenase family. Homohexamer arranged as a dimer of trimers. Fe cation serves as cofactor.

It catalyses the reaction homogentisate + O2 = 4-maleylacetoacetate + H(+). The protein operates within amino-acid degradation; L-phenylalanine degradation; acetoacetate and fumarate from L-phenylalanine: step 4/6. In terms of biological role, catalyzes the conversion of homogentisate to maleylacetoacetate. This Mus musculus (Mouse) protein is Homogentisate 1,2-dioxygenase (Hgd).